The following is a 525-amino-acid chain: GMP synthase [glutamine-hydrolyzing] (525 aa).

One can recognise a Glutamine amidotransferase type-1 domain in the interval 11 to 200 (PVLVVDFGAQ…LTEIAGLEQN (190 aa)). Catalysis depends on C88, which acts as the Nucleophile. Catalysis depends on residues H174 and E176. One can recognise a GMPS ATP-PPase domain in the interval 201 to 399 (WTAANIAEEL…LGLPEEIVNR (199 aa)). Residue 229–235 (SGGVDSA) coordinates ATP.

As to quaternary structure, homodimer.

The catalysed reaction is XMP + L-glutamine + ATP + H2O = GMP + L-glutamate + AMP + diphosphate + 2 H(+). It participates in purine metabolism; GMP biosynthesis; GMP from XMP (L-Gln route): step 1/1. In terms of biological role, catalyzes the synthesis of GMP from XMP. This Corynebacterium diphtheriae (strain ATCC 700971 / NCTC 13129 / Biotype gravis) protein is GMP synthase [glutamine-hydrolyzing].